Here is a 487-residue protein sequence, read N- to C-terminus: N-succinylglutamate 5-semialdehyde dehydrogenase (487 aa).

The tract at residues 1–23 (MTHFIKGQWHTGKGHDVASSNPA) is disordered. 220 to 225 (GSSRTG) contributes to the NAD(+) binding site. Catalysis depends on residues Glu243 and Cys277.

It belongs to the aldehyde dehydrogenase family. AstD subfamily.

The enzyme catalyses N-succinyl-L-glutamate 5-semialdehyde + NAD(+) + H2O = N-succinyl-L-glutamate + NADH + 2 H(+). The protein operates within amino-acid degradation; L-arginine degradation via AST pathway; L-glutamate and succinate from L-arginine: step 4/5. Catalyzes the NAD-dependent reduction of succinylglutamate semialdehyde into succinylglutamate. This is N-succinylglutamate 5-semialdehyde dehydrogenase from Shewanella oneidensis (strain ATCC 700550 / JCM 31522 / CIP 106686 / LMG 19005 / NCIMB 14063 / MR-1).